A 288-amino-acid polypeptide reads, in one-letter code: Small ribosomal subunit protein uS2 (288 aa).

The protein belongs to the universal ribosomal protein uS2 family. Component of the small ribosomal subunit. Mature ribosomes consist of a small (40S) and a large (60S) subunit. The 40S subunit contains about 33 different proteins and 1 molecule of RNA (18S). The 60S subunit contains about 49 different proteins and 3 molecules of RNA (28S, 5.8S and 5S). Interacts with ribosomal protein S21.

The protein localises to the cytoplasm. Functionally, required for the assembly and/or stability of the 40S ribosomal subunit. Required for the processing of the 20S rRNA-precursor to mature 18S rRNA in a late step of the maturation of 40S ribosomal subunits. This Aedes aegypti (Yellowfever mosquito) protein is Small ribosomal subunit protein uS2.